Here is a 365-residue protein sequence, read N- to C-terminus: Histidinol-phosphate aminotransferase 2 (365 aa).

Lys-226 carries the post-translational modification N6-(pyridoxal phosphate)lysine.

Belongs to the class-II pyridoxal-phosphate-dependent aminotransferase family. Histidinol-phosphate aminotransferase subfamily. In terms of assembly, homodimer. Pyridoxal 5'-phosphate serves as cofactor.

The catalysed reaction is L-histidinol phosphate + 2-oxoglutarate = 3-(imidazol-4-yl)-2-oxopropyl phosphate + L-glutamate. The protein operates within amino-acid biosynthesis; L-histidine biosynthesis; L-histidine from 5-phospho-alpha-D-ribose 1-diphosphate: step 7/9. This chain is Histidinol-phosphate aminotransferase 2 (hisC2), found in Pasteurella multocida (strain Pm70).